The following is a 173-amino-acid chain: Pyrimidine operon regulatory protein (173 aa).

Substrate is bound by residues 40 to 41 (TR), 97 to 105 (DDVLYTGRT), and Arg130. The PRPP-binding motif lies at 93–105 (VILVDDVLYTGRT).

This sequence belongs to the purine/pyrimidine phosphoribosyltransferase family. PyrR subfamily.

In terms of biological role, regulates transcriptional attenuation of the pyrimidine nucleotide (pyr) operon in response to exogenous pyrimidines, probably by binding to specific sites on pyr mRNA. This probably disrupts an antiterminator hairpin in the RNA and favors formation of a downstream transcription terminator, leading to a reduced expression of downstream genes. This chain is Pyrimidine operon regulatory protein, found in Lactococcus lactis subsp. lactis (strain IL1403) (Streptococcus lactis).